A 233-amino-acid chain; its full sequence is Orotidine 5'-phosphate decarboxylase (233 aa).

Substrate contacts are provided by residues aspartate 11, lysine 34, 61 to 70, threonine 117, arginine 179, glutamine 188, glycine 208, and arginine 209; that span reads DLKLHDIPNT. Lysine 63 (proton donor) is an active-site residue.

This sequence belongs to the OMP decarboxylase family. Type 1 subfamily. As to quaternary structure, homodimer.

It catalyses the reaction orotidine 5'-phosphate + H(+) = UMP + CO2. It functions in the pathway pyrimidine metabolism; UMP biosynthesis via de novo pathway; UMP from orotate: step 2/2. Its function is as follows. Catalyzes the decarboxylation of orotidine 5'-monophosphate (OMP) to uridine 5'-monophosphate (UMP). In Streptococcus pneumoniae (strain Hungary19A-6), this protein is Orotidine 5'-phosphate decarboxylase.